The sequence spans 64 residues: uncharacterized protein (64 aa).

This is an uncharacterized protein from Sulfolobus islandicus filamentous virus (isolate Iceland/Hveragerdi) (SIFV).